Consider the following 689-residue polypeptide: DNA-directed RNA polymerase subunit beta' (689 aa).

Residues cysteine 76, cysteine 78, cysteine 94, and cysteine 97 each coordinate Zn(2+). Mg(2+) contacts are provided by aspartate 496, aspartate 498, and aspartate 500.

The protein belongs to the RNA polymerase beta' chain family. RpoC1 subfamily. As to quaternary structure, in plastids the minimal PEP RNA polymerase catalytic core is composed of four subunits: alpha, beta, beta', and beta''. When a (nuclear-encoded) sigma factor is associated with the core the holoenzyme is formed, which can initiate transcription. It depends on Mg(2+) as a cofactor. Zn(2+) serves as cofactor.

The protein resides in the plastid. It localises to the chloroplast. The enzyme catalyses RNA(n) + a ribonucleoside 5'-triphosphate = RNA(n+1) + diphosphate. DNA-dependent RNA polymerase catalyzes the transcription of DNA into RNA using the four ribonucleoside triphosphates as substrates. The sequence is that of DNA-directed RNA polymerase subunit beta' from Illicium oligandrum (Star anise).